A 516-amino-acid polypeptide reads, in one-letter code: Anaerobic nitric oxide reductase transcription regulator NorR (516 aa).

A 4-aspartylphosphate modification is found at Asp-57. Residues 187–416 (IIGLSAPMLQ…LEHAIHRAVV (230 aa)) enclose the Sigma-54 factor interaction domain. Residues 215 to 222 (GETGTGKE) and 278 to 287 (ADNGTLFLDE) each bind ATP. A DNA-binding region (H-T-H motif) is located at residues 482-501 (WAATARALELDVANLHRLAK).

It participates in nitrogen metabolism; nitric oxide reduction. Required for the expression of anaerobic nitric oxide (NO) reductase, acts as a transcriptional activator for at least the norVW operon. Activation also requires sigma-54. This is Anaerobic nitric oxide reductase transcription regulator NorR from Klebsiella pneumoniae (strain 342).